Here is a 741-residue protein sequence, read N- to C-terminus: DNA ligase (741 aa).

NAD(+) contacts are provided by residues 78 to 82 (DADYD), 127 to 128 (SL), and E161. K163 functions as the N6-AMP-lysine intermediate in the catalytic mechanism. The NAD(+) site is built by R184, E219, K335, and K359. Residues C464, C467, C482, and C488 each contribute to the Zn(2+) site. In terms of domain architecture, BRCT spans 662 to 741 (VGDSPVAGKT…DAWRVLAGLA (80 aa)).

It belongs to the NAD-dependent DNA ligase family. LigA subfamily. Requires Mg(2+) as cofactor. The cofactor is Mn(2+).

The enzyme catalyses NAD(+) + (deoxyribonucleotide)n-3'-hydroxyl + 5'-phospho-(deoxyribonucleotide)m = (deoxyribonucleotide)n+m + AMP + beta-nicotinamide D-nucleotide.. DNA ligase that catalyzes the formation of phosphodiester linkages between 5'-phosphoryl and 3'-hydroxyl groups in double-stranded DNA using NAD as a coenzyme and as the energy source for the reaction. It is essential for DNA replication and repair of damaged DNA. This is DNA ligase from Dinoroseobacter shibae (strain DSM 16493 / NCIMB 14021 / DFL 12).